Reading from the N-terminus, the 547-residue chain is Glucose-6-phosphate isomerase (547 aa).

E351 serves as the catalytic Proton donor. Residues H382 and K509 contribute to the active site.

It belongs to the GPI family.

Its subcellular location is the cytoplasm. The enzyme catalyses alpha-D-glucose 6-phosphate = beta-D-fructose 6-phosphate. Its pathway is carbohydrate biosynthesis; gluconeogenesis. The protein operates within carbohydrate degradation; glycolysis; D-glyceraldehyde 3-phosphate and glycerone phosphate from D-glucose: step 2/4. Functionally, catalyzes the reversible isomerization of glucose-6-phosphate to fructose-6-phosphate. The chain is Glucose-6-phosphate isomerase from Coxiella burnetii (strain CbuK_Q154) (Coxiella burnetii (strain Q154)).